The primary structure comprises 500 residues: Glucose-6-phosphate isomerase (500 aa).

The active-site Proton donor is glutamate 332. Active-site residues include histidine 363 and lysine 473.

This sequence belongs to the GPI family.

The protein localises to the cytoplasm. The enzyme catalyses alpha-D-glucose 6-phosphate = beta-D-fructose 6-phosphate. Its pathway is carbohydrate biosynthesis; gluconeogenesis. It functions in the pathway carbohydrate degradation; glycolysis; D-glyceraldehyde 3-phosphate and glycerone phosphate from D-glucose: step 2/4. In terms of biological role, catalyzes the reversible isomerization of glucose-6-phosphate to fructose-6-phosphate. This chain is Glucose-6-phosphate isomerase, found in Rhizorhabdus wittichii (strain DSM 6014 / CCUG 31198 / JCM 15750 / NBRC 105917 / EY 4224 / RW1) (Sphingomonas wittichii).